The sequence spans 216 residues: GTP cyclohydrolase 1 (216 aa).

C108, H111, and C179 together coordinate Zn(2+).

The protein belongs to the GTP cyclohydrolase I family. In terms of assembly, toroid-shaped homodecamer, composed of two pentamers of five dimers.

The enzyme catalyses GTP + H2O = 7,8-dihydroneopterin 3'-triphosphate + formate + H(+). It participates in cofactor biosynthesis; 7,8-dihydroneopterin triphosphate biosynthesis; 7,8-dihydroneopterin triphosphate from GTP: step 1/1. The polypeptide is GTP cyclohydrolase 1 (Shewanella sp. (strain MR-7)).